The following is a 112-amino-acid chain: Ribosome-binding factor A (112 aa).

This sequence belongs to the RbfA family. Monomer. Binds 30S ribosomal subunits, but not 50S ribosomal subunits or 70S ribosomes.

The protein localises to the cytoplasm. In terms of biological role, one of several proteins that assist in the late maturation steps of the functional core of the 30S ribosomal subunit. Associates with free 30S ribosomal subunits (but not with 30S subunits that are part of 70S ribosomes or polysomes). Required for efficient processing of 16S rRNA. May interact with the 5'-terminal helix region of 16S rRNA. The chain is Ribosome-binding factor A from Ruthia magnifica subsp. Calyptogena magnifica.